Consider the following 346-residue polypeptide: MEFSAKQIAAFIQGEIIGDENATVHTFAKIEEGIPGAISFLSNPKYTPYIYETKASIVLVNKDFTPEQEVKATLIKVDNAYESLAKLLNLYEMSKPKRTGIDERAYVAETAKIGKDVYIAPFACIGDHAEVGDNTVIHPHATVGGGAKIGSNCILYANSTVYHDCRVGNNCILHAGCVIGADGFGFAPTPQGYEKIPQIGIVILEDNVEVGANTCIDRATMGATVIHSGVKLDNLVQIAHNDEIGSHTVMAAQVGIAGSTKVGEWCMFGGQVGIAGHLKIGNQVNLGAQSGVPGNIKSGSQLIGTPPMELKQFFKASIVQKSLPEMQIELRNLRKEIEELKQQLNK.

Histidine 240 serves as the catalytic Proton acceptor.

Belongs to the transferase hexapeptide repeat family. LpxD subfamily. As to quaternary structure, homotrimer.

It catalyses the reaction a UDP-3-O-[(3R)-3-hydroxyacyl]-alpha-D-glucosamine + a (3R)-hydroxyacyl-[ACP] = a UDP-2-N,3-O-bis[(3R)-3-hydroxyacyl]-alpha-D-glucosamine + holo-[ACP] + H(+). Its pathway is bacterial outer membrane biogenesis; LPS lipid A biosynthesis. Its function is as follows. Catalyzes the N-acylation of UDP-3-O-acylglucosamine using 3-hydroxyacyl-ACP as the acyl donor. Is involved in the biosynthesis of lipid A, a phosphorylated glycolipid that anchors the lipopolysaccharide to the outer membrane of the cell. In Bacteroides fragilis (strain ATCC 25285 / DSM 2151 / CCUG 4856 / JCM 11019 / LMG 10263 / NCTC 9343 / Onslow / VPI 2553 / EN-2), this protein is UDP-3-O-acylglucosamine N-acyltransferase.